The chain runs to 342 residues: Biotin synthase (342 aa).

One can recognise a Radical SAM core domain in the interval 36–260; sequence NRIQISTLLS…MMPKSYIRLS (225 aa). Residues C51, C55, and C58 each contribute to the [4Fe-4S] cluster site. C95, C126, C186, and R258 together coordinate [2Fe-2S] cluster.

Belongs to the radical SAM superfamily. Biotin synthase family. As to quaternary structure, homodimer. [4Fe-4S] cluster serves as cofactor. The cofactor is [2Fe-2S] cluster.

It catalyses the reaction (4R,5S)-dethiobiotin + (sulfur carrier)-SH + 2 reduced [2Fe-2S]-[ferredoxin] + 2 S-adenosyl-L-methionine = (sulfur carrier)-H + biotin + 2 5'-deoxyadenosine + 2 L-methionine + 2 oxidized [2Fe-2S]-[ferredoxin]. It functions in the pathway cofactor biosynthesis; biotin biosynthesis; biotin from 7,8-diaminononanoate: step 2/2. Catalyzes the conversion of dethiobiotin (DTB) to biotin by the insertion of a sulfur atom into dethiobiotin via a radical-based mechanism. The protein is Biotin synthase of Buchnera aphidicola subsp. Schizaphis graminum (strain Sg).